A 209-amino-acid chain; its full sequence is rRNA N(6)-adenosine-methyltransferase METTL5 (209 aa).

S-adenosyl-L-methionine contacts are provided by residues Gln28, Thr31, Gly59, Cys62, Val64, Asp81, and 108 to 109 (DV).

Belongs to the methyltransferase superfamily. PrmA family. As to quaternary structure, heterodimer; heterodimerizes with TRMT112. In terms of tissue distribution, expressed from very early development (8 post-conceptual weeks) and expression persists through adulthood in multiple substructures of the brain, including the cerebellar cortex, hippocampus, and striatum.

Its subcellular location is the nucleus. The protein resides in the presynapse. The protein localises to the postsynapse. The catalysed reaction is adenosine(1832) in 18S rRNA + S-adenosyl-L-methionine = N(6)-methyladenosine(1832) in 18S rRNA + S-adenosyl-L-homocysteine + H(+). RRNA N6-adenosine-methyltransferase activity is inhibited by zinc. Its function is as follows. Catalytic subunit of a heterodimer with TRMT112, which specifically methylates the 6th position of adenine in position 1832 of 18S rRNA. N6-methylation of adenine(1832) in 18S rRNA resides in the decoding center of 18S rRNA and is required for translation and embryonic stem cells (ESCs) pluripotency and differentiation. The chain is rRNA N(6)-adenosine-methyltransferase METTL5 from Homo sapiens (Human).